A 265-amino-acid polypeptide reads, in one-letter code: Octanoyltransferase (265 aa).

The region spanning 35–254 (DEVPDTVLLL…HLRDVLENAE (220 aa)) is the BPL/LPL catalytic domain. Substrate contacts are provided by residues 73-80 (RGGKITWH), 184-186 (AIG), and 197-199 (GFA). Cys-215 functions as the Acyl-thioester intermediate in the catalytic mechanism.

It belongs to the LipB family.

The protein localises to the cytoplasm. The catalysed reaction is octanoyl-[ACP] + L-lysyl-[protein] = N(6)-octanoyl-L-lysyl-[protein] + holo-[ACP] + H(+). The protein operates within protein modification; protein lipoylation via endogenous pathway; protein N(6)-(lipoyl)lysine from octanoyl-[acyl-carrier-protein]: step 1/2. Catalyzes the transfer of endogenously produced octanoic acid from octanoyl-acyl-carrier-protein onto the lipoyl domains of lipoate-dependent enzymes. Lipoyl-ACP can also act as a substrate although octanoyl-ACP is likely to be the physiological substrate. This Streptomyces coelicolor (strain ATCC BAA-471 / A3(2) / M145) protein is Octanoyltransferase.